Reading from the N-terminus, the 751-residue chain is Ribosomal RNA large subunit methyltransferase K/L (751 aa).

Residues 44 to 155 (LAYRTCLWSR…KNKLVLSIDL (112 aa)) enclose the THUMP domain.

The protein belongs to the methyltransferase superfamily. RlmKL family.

It is found in the cytoplasm. It catalyses the reaction guanosine(2445) in 23S rRNA + S-adenosyl-L-methionine = N(2)-methylguanosine(2445) in 23S rRNA + S-adenosyl-L-homocysteine + H(+). It carries out the reaction guanosine(2069) in 23S rRNA + S-adenosyl-L-methionine = N(2)-methylguanosine(2069) in 23S rRNA + S-adenosyl-L-homocysteine + H(+). Specifically methylates the guanine in position 2445 (m2G2445) and the guanine in position 2069 (m7G2069) of 23S rRNA. This chain is Ribosomal RNA large subunit methyltransferase K/L, found in Cellvibrio japonicus (strain Ueda107) (Pseudomonas fluorescens subsp. cellulosa).